The chain runs to 457 residues: Multidrug resistance protein MdtK (457 aa).

The next 12 membrane-spanning stretches (helical) occupy residues 11–31 (LLAL…MGFV), 53–73 (IWLP…PVIA), 93–113 (WLAG…GYII), 127–147 (AVGY…FQVA), 160–180 (GMVM…IFIY), 189–209 (GGVG…LAMV), 243–263 (LPIA…ALLV), 276–296 (IALN…AAVT), 314–334 (AART…IFTV), 350–370 (VVTL…SDSI), 387–407 (IFYI…YILA), and 418–438 (PAGF…MMML).

It belongs to the multi antimicrobial extrusion (MATE) (TC 2.A.66.1) family. MdtK subfamily.

The protein resides in the cell inner membrane. Multidrug efflux pump that functions probably as a Na(+)/drug antiporter. The chain is Multidrug resistance protein MdtK from Escherichia coli O17:K52:H18 (strain UMN026 / ExPEC).